The primary structure comprises 143 residues: Cold shock domain-containing protein CG9705 (143 aa).

Residues 1–30 are disordered; it reads MTEPRTPEKLLAAKPPVLHHNSHSPNASLQ. Phosphoserine is present on residues serine 22, serine 24, serine 28, and serine 33. A CSD domain is found at 54-121; it reads VVTGMVKSFS…KHQAVHVQIS (68 aa). A phosphoserine mark is found at serine 139 and serine 140.

This Drosophila melanogaster (Fruit fly) protein is Cold shock domain-containing protein CG9705.